The primary structure comprises 548 residues: Membrane protein insertase YidC (548 aa).

Residues asparagine 6–aspartate 26 traverse the membrane as a helical segment. Positions asparagine 28–serine 55 are disordered. Residues glutamine 30 to glutamine 50 show a composition bias toward low complexity. The next 4 helical transmembrane spans lie at phenylalanine 350–tyrosine 370, leucine 420–leucine 440, leucine 458–isoleucine 478, and proline 499–valine 519.

This sequence belongs to the OXA1/ALB3/YidC family. Type 1 subfamily. Interacts with the Sec translocase complex via SecD. Specifically interacts with transmembrane segments of nascent integral membrane proteins during membrane integration.

It is found in the cell inner membrane. Its function is as follows. Required for the insertion and/or proper folding and/or complex formation of integral membrane proteins into the membrane. Involved in integration of membrane proteins that insert both dependently and independently of the Sec translocase complex, as well as at least some lipoproteins. Aids folding of multispanning membrane proteins. The protein is Membrane protein insertase YidC of Escherichia coli O127:H6 (strain E2348/69 / EPEC).